The sequence spans 413 residues: Serine hydroxymethyltransferase (413 aa).

(6S)-5,6,7,8-tetrahydrofolate contacts are provided by residues leucine 115 and 119–121 (GHL). Lysine 224 carries the N6-(pyridoxal phosphate)lysine modification.

It belongs to the SHMT family. As to quaternary structure, homodimer. Pyridoxal 5'-phosphate is required as a cofactor.

It localises to the cytoplasm. The catalysed reaction is (6R)-5,10-methylene-5,6,7,8-tetrahydrofolate + glycine + H2O = (6S)-5,6,7,8-tetrahydrofolate + L-serine. It participates in one-carbon metabolism; tetrahydrofolate interconversion. Its pathway is amino-acid biosynthesis; glycine biosynthesis; glycine from L-serine: step 1/1. Its function is as follows. Catalyzes the reversible interconversion of serine and glycine with tetrahydrofolate (THF) serving as the one-carbon carrier. This reaction serves as the major source of one-carbon groups required for the biosynthesis of purines, thymidylate, methionine, and other important biomolecules. Also exhibits THF-independent aldolase activity toward beta-hydroxyamino acids, producing glycine and aldehydes, via a retro-aldol mechanism. This chain is Serine hydroxymethyltransferase, found in Mycoplasma capricolum subsp. capricolum (strain California kid / ATCC 27343 / NCTC 10154).